The primary structure comprises 507 residues: Histidine ammonia-lyase (507 aa).

The segment at residues 141-143 is a cross-link (5-imidazolinone (Ala-Gly)); it reads ASG. 2,3-didehydroalanine (Ser) is present on S142.

Belongs to the PAL/histidase family. Contains an active site 4-methylidene-imidazol-5-one (MIO), which is formed autocatalytically by cyclization and dehydration of residues Ala-Ser-Gly.

Its subcellular location is the cytoplasm. The catalysed reaction is L-histidine = trans-urocanate + NH4(+). It functions in the pathway amino-acid degradation; L-histidine degradation into L-glutamate; N-formimidoyl-L-glutamate from L-histidine: step 1/3. This is Histidine ammonia-lyase from Burkholderia cenocepacia (strain ATCC BAA-245 / DSM 16553 / LMG 16656 / NCTC 13227 / J2315 / CF5610) (Burkholderia cepacia (strain J2315)).